We begin with the raw amino-acid sequence, 204 residues long: MYPDLSQRQTDILEYIKRVIREKGYPPSVREIGDAVGLMSSSTVHGHLQTIEEKGYIRRDPTKPRAIEILDSSSDANEKKTVFVPIIGKVTAGQPILAQENIEDTFPLPVDVVNSDTVFMLRVKGESMIDAGIMDGDLILVRQQKVARNGEIVVAMIDEEATVKRFYKEKTLIRLQPENPYMEPIYSQDVTILGKVIGVFRILH.

Positions 29–49 (VREIGDAVGLMSSSTVHGHLQ) form a DNA-binding region, H-T-H motif. Active-site for autocatalytic cleavage activity residues include Ser127 and Lys164.

The protein belongs to the peptidase S24 family. Homodimer.

The catalysed reaction is Hydrolysis of Ala-|-Gly bond in repressor LexA.. In terms of biological role, represses a number of genes involved in the response to DNA damage (SOS response), including recA and lexA. In the presence of single-stranded DNA, RecA interacts with LexA causing an autocatalytic cleavage which disrupts the DNA-binding part of LexA, leading to derepression of the SOS regulon and eventually DNA repair. The protein is LexA repressor of Desulfitobacterium hafniense (strain DSM 10664 / DCB-2).